Here is an 86-residue protein sequence, read N- to C-terminus: Palustrin-3b (86 aa).

The first 22 residues, 1–22, serve as a signal peptide directing secretion; the sequence is MFTLKKPLLLIVLLGIISLSLC. The propeptide occupies 23–36; that stretch reads EQERNADEDEESEI. The cysteines at positions 81 and 86 are disulfide-linked.

In terms of tissue distribution, expressed by the skin glands.

The protein localises to the secreted. Antimicrobial peptide. The chain is Palustrin-3b from Odorrana versabilis (Chinese bamboo leaf odorous frog).